The chain runs to 142 residues: Type II secretion system core protein G (142 aa).

A propeptide spans 1 to 8 (MRRQSQRG) (leader sequence). N-methylphenylalanine is present on F9. Residues 9 to 29 (FTLLEIMVVIVIMGILASLVV) form a helical membrane-spanning segment. The interval 122 to 142 (SGQDGVPGTDDDIGNWTLSKK) is disordered.

The protein belongs to the GSP G family. In terms of assembly, type II secretion system is composed of four main components: the outer membrane complex, the inner membrane complex, the cytoplasmic secretion ATPase and the periplasm-spanning pseudopilus. Forms homomultimers. Cleaved by the prepilin peptidase. Post-translationally, methylated by prepilin peptidase at the amino group of the N-terminal phenylalanine once the leader sequence is cleaved.

It localises to the cell inner membrane. In terms of biological role, core component of the type II secretion system required for the energy-dependent secretion of extracellular factors such as proteases and toxins from the periplasm. Pseudopilin (pilin-like) protein that polymerizes to form the pseudopilus. Further polymerization triggers pseudopilus growth. The polypeptide is Type II secretion system core protein G (Klebsiella michiganensis (strain ATCC 8724 / DSM 4798 / JCM 20051 / NBRC 3318 / NRRL B-199 / KCTC 1686 / BUCSAV 143 / CCM 1901)).